Consider the following 528-residue polypeptide: Homoserine O-acetyltransferase (528 aa).

The 186-residue stretch at 60 to 245 (LVICHALTGS…AALLTYRSRD (186 aa)) folds into the AB hydrolase-1 domain. The active-site Nucleophile is Ser-154. Disordered regions lie at residues 250-335 (RFGR…VKTQ) and 388-413 (DLSA…DATE). Residues 273-282 (QETTDPSVPS) are compositionally biased toward polar residues. Positions 295–304 (AWREHNDGHR) are enriched in basic and acidic residues. The segment covering 389–409 (LSAPSRDTSLSSLSSGLPSSP) has biased composition (low complexity). Residues Asp-438 and His-467 contribute to the active site.

Belongs to the AB hydrolase superfamily. MetX family.

Its subcellular location is the cytoplasm. The enzyme catalyses L-homoserine + acetyl-CoA = O-acetyl-L-homoserine + CoA. The protein operates within amino-acid biosynthesis; L-methionine biosynthesis via de novo pathway; O-acetyl-L-homoserine from L-homoserine: step 1/1. With respect to regulation, inhibited by 6-carbamoyl-3a,4,5,9b-tetrahydro-3H-cyclopenta[ c]quinoline-4-carboxylic acid (CTCQC). Commits homoserine to the methionine biosynthesis pathway by catalyzing its O-acetylation. This Cryptococcus neoformans var. grubii serotype A (strain H99 / ATCC 208821 / CBS 10515 / FGSC 9487) (Filobasidiella neoformans var. grubii) protein is Homoserine O-acetyltransferase.